The sequence spans 252 residues: Autophagy-related protein 27 (252 aa).

Positions 1–15 (MILASLLTFATAALA) are cleaved as a signal peptide. One can recognise an MRH domain in the interval 16–161 (FDCSDKELER…SMKTKAACIT (146 aa)). The Lumenal segment spans residues 16–176 (FDCSDKELER…KKEKHDNGES (161 aa)). 3 disulfides stabilise this stretch: Cys-18–Cys-57, Cys-66–Cys-73, and Cys-130–Cys-159. N-linked (GlcNAc...) asparagine glycosylation is present at Asn-49. The chain crosses the membrane as a helical span at residues 177 to 197 (WGWFTWIFIFLVLFLSIYIIG). The Cytoplasmic portion of the chain corresponds to 198–252 (GAWFQYNKGNAIDFQSALKEVVENFIELLKGLPSFGKEIIEKFTGRSNRGEYSAV).

Belongs to the ATG27 family.

It localises to the cytoplasmic vesicle membrane. It is found in the golgi apparatus membrane. The protein resides in the mitochondrion membrane. Its subcellular location is the preautophagosomal structure membrane. Plays a key role in autophagy. Effector of VPS34 phosphatidylinositol 3-phosphate kinase signaling. Regulates the cytoplasm to vacuole transport (Cvt) vesicle formation. Plays a role in ATG protein retrieval from the pre-autophagosomal structure (PAS) and is especially required for autophagy-dependent cycling of ATG9. Finally, plays an important role in biofilm formation and resistance to antifungal compounds such as fluconazole, itraconazole, terbinafine and caspofungin. The protein is Autophagy-related protein 27 of Candida albicans (strain SC5314 / ATCC MYA-2876) (Yeast).